Here is a 399-residue protein sequence, read N- to C-terminus: Protein HYM1 (399 aa).

Over residues valine 363 to valine 382 the composition is skewed to low complexity. A disordered region spans residues valine 363–arginine 399. The segment covering methionine 383–arginine 399 has biased composition (polar residues).

This sequence belongs to the Mo25 family.

This chain is Protein HYM1 (HYM1), found in Saccharomyces cerevisiae (strain ATCC 204508 / S288c) (Baker's yeast).